We begin with the raw amino-acid sequence, 306 residues long: Ornithine carbamoyltransferase (306 aa).

Residues 53 to 56 (STRT), Gln-80, Arg-104, and 131 to 134 (HPCQ) contribute to the carbamoyl phosphate site. Residues Asn-162, Asp-219, and 223–224 (SM) contribute to the L-ornithine site. Carbamoyl phosphate is bound by residues 259–260 (CL) and Arg-287.

Belongs to the aspartate/ornithine carbamoyltransferase superfamily. OTCase family.

The protein resides in the cytoplasm. The catalysed reaction is carbamoyl phosphate + L-ornithine = L-citrulline + phosphate + H(+). It functions in the pathway amino-acid biosynthesis; L-arginine biosynthesis; L-arginine from L-ornithine and carbamoyl phosphate: step 1/3. Functionally, reversibly catalyzes the transfer of the carbamoyl group from carbamoyl phosphate (CP) to the N(epsilon) atom of ornithine (ORN) to produce L-citrulline. This Pseudomonas syringae pv. tomato (strain ATCC BAA-871 / DC3000) protein is Ornithine carbamoyltransferase.